Consider the following 57-residue polypeptide: Potassium channel toxin KTx1 (57 aa).

The N-terminal stretch at 1–13 (FLVLLLVSLMCYA) is a signal peptide. Positions 14–18 (EIAEG) are excised as a propeptide. Cystine bridges form between Cys-24/Cys-37, Cys-30/Cys-42, and Cys-36/Cys-51.

It belongs to the scorpion calcin-like family. KTX subfamily. As to expression, expressed by the venom gland.

It is found in the secreted. Functionally, this recombinant peptide inhibits voltage-gated potassium channels mKv1.3/KCNA3 (IC(50)=1.70 uM), mKv1.1/KCNA1 (10 uM inhibits 40% of currents) and hKv1.2/KCNA2 (10 uM inhibits 42% of currents). May also increase intracellular calcium release through the activation of nuclear inositol 1,4,5-trisphosphate receptors (ITPR) of cardiomyocytes, thereby causing an increase in the contraction frequency of these cells. The chain is Potassium channel toxin KTx1 from Isometrus maculatus (Lesser brown scorpion).